A 187-amino-acid polypeptide reads, in one-letter code: Large ribosomal subunit protein uL22 (187 aa).

The segment at Asp-155–Glu-187 is disordered. Positions Lys-169 to Ala-178 are enriched in basic residues.

The protein belongs to the universal ribosomal protein uL22 family.

The protein is Large ribosomal subunit protein uL22 (RpL17) of Lonomia obliqua (Moth).